Consider the following 527-residue polypeptide: tRNA pseudouridine synthase Pus10 (527 aa).

2 residues coordinate Zn(2+): cysteine 21 and cysteine 24. Residues 42–87 (KELLNELQKFLEPEKPELILEAPNPPLKKIRLHEDGIDNLSEDGKE) adopt a coiled-coil conformation. Serine 82 is subject to Phosphoserine. Zn(2+)-binding residues include cysteine 107 and cysteine 110. An RNA binding forefinger loop region spans residues 302-315 (TPWIIDGERKMESS). Aspartate 342 functions as the Nucleophile in the catalytic mechanism. Positions 440 to 455 (QKTPLRVLHRRPLAVR) are RNA binding thumb loop.

Belongs to the pseudouridine synthase Pus10 family. Interacts with components of the microprocessor complex DROSHA and DGCR8. Post-translationally, proteolytically cleaved during TRAIL-induced cell death. Cleaved, in vitro, either by caspase-3 (CASP3) or caspase-8 (CASP8).

It is found in the nucleus. Its subcellular location is the cytoplasm. The protein resides in the mitochondrion. The catalysed reaction is uridine(55) in tRNA = pseudouridine(55) in tRNA. It catalyses the reaction uridine(54) in tRNA = pseudouridine(54) in tRNA. Functionally, protein with different functions depending on its subcellular location: involved in miRNA processing in the nucleus and acts as a tRNA pseudouridylate synthase in the cytoplasm. In the cytoplasm, acts as a pseudouridylate synthase by catalyzing synthesis of pseudouridine(54) and pseudouridine(55) from uracil-54 and uracil-55, respectively, in the psi GC loop of a subset of tRNAs. tRNA pseudouridylate synthase activity is enhanced by the presence of 1-methyladenosine at position 53-61 of tRNAs. Does not show tRNA pseudouridylate synthase activity in the nucleus. In the nucleus, promotes primary microRNAs (pri-miRNAs) processing independently of its RNA pseudouridylate synthase activity. Binds pri-miRNAs. Modulator of TRAIL/TNFSF10-induced cell death via activation of procaspase-8 and BID cleavage. Required for the progression of the apoptotic signal through intrinsic mitochondrial cell death. This is tRNA pseudouridine synthase Pus10 from Mus musculus (Mouse).